The chain runs to 700 residues: DNA topoisomerase 1 (700 aa).

Residues 3–114 (KNLIIVESPA…TLPRIVFHEI (112 aa)) form the Toprim domain. The Mg(2+) site is built by glutamate 9 and aspartate 83. A Topo IA-type catalytic domain is found at 130–553 (NMHSVNAQQT…EFYYPFMRKI (424 aa)). An interaction with DNA region spans residues 164–169 (SAGRVQ). Catalysis depends on tyrosine 298, which acts as the O-(5'-phospho-DNA)-tyrosine intermediate. 3 C4-type zinc fingers span residues 573-599 (CPDCGGELAIRKGRFGEFVACLNFPKC), 629-656 (CPSCQKGEIVERFSKRGKFYGCSAYPKC), and 669-692 (CEECGETLVIKELKKGTFLECLKC).

Belongs to the type IA topoisomerase family. As to quaternary structure, monomer. Mg(2+) serves as cofactor.

The catalysed reaction is ATP-independent breakage of single-stranded DNA, followed by passage and rejoining.. Functionally, releases the supercoiling and torsional tension of DNA, which is introduced during the DNA replication and transcription, by transiently cleaving and rejoining one strand of the DNA duplex. Introduces a single-strand break via transesterification at a target site in duplex DNA. The scissile phosphodiester is attacked by the catalytic tyrosine of the enzyme, resulting in the formation of a DNA-(5'-phosphotyrosyl)-enzyme intermediate and the expulsion of a 3'-OH DNA strand. The free DNA strand then undergoes passage around the unbroken strand, thus removing DNA supercoils. Finally, in the religation step, the DNA 3'-OH attacks the covalent intermediate to expel the active-site tyrosine and restore the DNA phosphodiester backbone. The polypeptide is DNA topoisomerase 1 (Campylobacter jejuni subsp. jejuni serotype O:2 (strain ATCC 700819 / NCTC 11168)).